A 309-amino-acid polypeptide reads, in one-letter code: GTP cyclohydrolase MptA (309 aa).

The protein belongs to the GTP cyclohydrolase IV family. Homodimer. Requires Fe(2+) as cofactor.

It carries out the reaction GTP + H2O = 7,8-dihydroneopterin 2',3'-cyclic phosphate + formate + diphosphate + H(+). The protein operates within cofactor biosynthesis; 5,6,7,8-tetrahydromethanopterin biosynthesis. Functionally, converts GTP to 7,8-dihydro-D-neopterin 2',3'-cyclic phosphate, the first intermediate in the biosynthesis of coenzyme methanopterin. The chain is GTP cyclohydrolase MptA from Methanococcus aeolicus (strain ATCC BAA-1280 / DSM 17508 / OCM 812 / Nankai-3).